A 393-amino-acid polypeptide reads, in one-letter code: Asparagine--oxo-acid transaminase (393 aa).

The L-asparagine site is built by G39, W126, and N176. K239 carries the post-translational modification N6-(pyridoxal phosphate)lysine. R370 serves as a coordination point for L-asparagine.

This sequence belongs to the class-I pyridoxal-phosphate-dependent aminotransferase family. Pyridoxal 5'-phosphate serves as cofactor.

It catalyses the reaction a 2-oxocarboxylate + L-asparagine = 2-oxosuccinamate + an L-alpha-amino acid. The enzyme catalyses L-asparagine + 2-oxoglutarate = 2-oxosuccinamate + L-glutamate. Catalyzes the transamination reaction between L-asparagine and 2-oxoglutarate to produce L-glutamate and 2-oxosuccinamate. Is not active with pyruvate as amine acceptor. May also use other amino acids as substrates. This Streptococcus mutans serotype c (strain ATCC 700610 / UA159) protein is Asparagine--oxo-acid transaminase.